A 371-amino-acid polypeptide reads, in one-letter code: Cytochrome b (371 aa).

The next 4 membrane-spanning stretches (helical) occupy residues 25-45 (FGSMLLTCLALQVLTGFFLAV), 69-90 (WMMQNLHAIGASMFFICIYIHI), 105-125 (WMSGITLLITLMATAFFGYVL), and 170-190 (FFALHFILPFAIISLSSLHII). Residues His-75 and His-89 each contribute to the heme b site. Heme b-binding residues include His-174 and His-188. His-193 lines the a ubiquinone pocket. The next 4 helical transmembrane spans lie at 218 to 238 (YKDLLLLTLMILFLFIIVSFF), 280 to 300 (LGGALALVMSIMILFTIPFMH), 312 to 332 (LSQLMFWTLVSTFITITWAAT), and 339 to 358 (YIMISQMTATLYFTFFLSIP).

The protein belongs to the cytochrome b family. In terms of assembly, the cytochrome bc1 complex contains 3 respiratory subunits (MT-CYB, CYC1 and UQCRFS1), 2 core proteins (UQCRC1 and UQCRC2) and probably 6 low-molecular weight proteins. Requires heme b as cofactor.

The protein resides in the mitochondrion inner membrane. Component of the ubiquinol-cytochrome c reductase complex (complex III or cytochrome b-c1 complex) that is part of the mitochondrial respiratory chain. The b-c1 complex mediates electron transfer from ubiquinol to cytochrome c. Contributes to the generation of a proton gradient across the mitochondrial membrane that is then used for ATP synthesis. This Simalia amethistina (Amethystine python) protein is Cytochrome b (MT-CYB).